Here is a 244-residue protein sequence, read N- to C-terminus: 5-oxoprolinase subunit A (244 aa).

Belongs to the LamB/PxpA family. As to quaternary structure, forms a complex composed of PxpA, PxpB and PxpC.

The enzyme catalyses 5-oxo-L-proline + ATP + 2 H2O = L-glutamate + ADP + phosphate + H(+). Functionally, catalyzes the cleavage of 5-oxoproline to form L-glutamate coupled to the hydrolysis of ATP to ADP and inorganic phosphate. The polypeptide is 5-oxoprolinase subunit A (Salmonella typhi).